A 151-amino-acid chain; its full sequence is Small ribosomal subunit protein uS15 (151 aa).

Position 32 is a phosphoserine (serine 32). Glycyl lysine isopeptide (Lys-Gly) (interchain with G-Cter in ubiquitin) cross-links involve residues lysine 39 and lysine 43.

Belongs to the universal ribosomal protein uS15 family. In terms of assembly, component of the small ribosomal subunit (SSU). Mature yeast ribosomes consist of a small (40S) and a large (60S) subunit. The 40S small subunit contains 1 molecule of ribosomal RNA (18S rRNA) and 33 different proteins (encoded by 57 genes). The large 60S subunit contains 3 rRNA molecules (25S, 5.8S and 5S rRNA) and 46 different proteins (encoded by 81 genes).

The protein resides in the cytoplasm. Its function is as follows. Component of the ribosome, a large ribonucleoprotein complex responsible for the synthesis of proteins in the cell. The small ribosomal subunit (SSU) binds messenger RNAs (mRNAs) and translates the encoded message by selecting cognate aminoacyl-transfer RNA (tRNA) molecules. The large subunit (LSU) contains the ribosomal catalytic site termed the peptidyl transferase center (PTC), which catalyzes the formation of peptide bonds, thereby polymerizing the amino acids delivered by tRNAs into a polypeptide chain. The nascent polypeptides leave the ribosome through a tunnel in the LSU and interact with protein factors that function in enzymatic processing, targeting, and the membrane insertion of nascent chains at the exit of the ribosomal tunnel. The sequence is that of Small ribosomal subunit protein uS15 from Saccharomyces cerevisiae (strain ATCC 204508 / S288c) (Baker's yeast).